The following is a 247-amino-acid chain: uncharacterized protein (247 aa).

An NADP(+)-binding site is contributed by 4 to 28 (ALVTGGSRGIGRATALLLAQEGYTV). Serine 142 provides a ligand contact to substrate. Residue tyrosine 156 is the Proton acceptor of the active site.

It belongs to the short-chain dehydrogenases/reductases (SDR) family.

This is an uncharacterized protein from Escherichia coli (strain K12).